The chain runs to 173 residues: Crossover junction endodeoxyribonuclease RuvC (173 aa).

Catalysis depends on residues aspartate 8, glutamate 67, and aspartate 139. Mg(2+)-binding residues include aspartate 8, glutamate 67, and aspartate 139.

Belongs to the RuvC family. As to quaternary structure, homodimer which binds Holliday junction (HJ) DNA. The HJ becomes 2-fold symmetrical on binding to RuvC with unstacked arms; it has a different conformation from HJ DNA in complex with RuvA. In the full resolvosome a probable DNA-RuvA(4)-RuvB(12)-RuvC(2) complex forms which resolves the HJ. Mg(2+) serves as cofactor.

The protein resides in the cytoplasm. The catalysed reaction is Endonucleolytic cleavage at a junction such as a reciprocal single-stranded crossover between two homologous DNA duplexes (Holliday junction).. The RuvA-RuvB-RuvC complex processes Holliday junction (HJ) DNA during genetic recombination and DNA repair. Endonuclease that resolves HJ intermediates. Cleaves cruciform DNA by making single-stranded nicks across the HJ at symmetrical positions within the homologous arms, yielding a 5'-phosphate and a 3'-hydroxyl group; requires a central core of homology in the junction. The consensus cleavage sequence is 5'-(A/T)TT(C/G)-3'. Cleavage occurs on the 3'-side of the TT dinucleotide at the point of strand exchange. HJ branch migration catalyzed by RuvA-RuvB allows RuvC to scan DNA until it finds its consensus sequence, where it cleaves and resolves the cruciform DNA. The sequence is that of Crossover junction endodeoxyribonuclease RuvC from Salmonella arizonae (strain ATCC BAA-731 / CDC346-86 / RSK2980).